A 365-amino-acid chain; its full sequence is Alanine racemase (365 aa).

Lys-36 functions as the Proton acceptor; specific for D-alanine in the catalytic mechanism. The residue at position 36 (Lys-36) is an N6-(pyridoxal phosphate)lysine. Substrate is bound at residue Arg-132. Tyr-257 acts as the Proton acceptor; specific for L-alanine in catalysis. Residue Met-305 participates in substrate binding.

This sequence belongs to the alanine racemase family. It depends on pyridoxal 5'-phosphate as a cofactor.

The catalysed reaction is L-alanine = D-alanine. The protein operates within amino-acid biosynthesis; D-alanine biosynthesis; D-alanine from L-alanine: step 1/1. Catalyzes the interconversion of L-alanine and D-alanine. May also act on other amino acids. In Xylella fastidiosa (strain Temecula1 / ATCC 700964), this protein is Alanine racemase (alr).